Consider the following 604-residue polypeptide: Netrin-1 (604 aa).

An N-terminal signal peptide occupies residues 1-24; sequence MMRAVWEALAALAAVACLVGAVRG. The Laminin N-terminal domain maps to 47–284; it reads HPRRCIPDFV…AVSDLQVGGR (238 aa). N95, N116, and N131 each carry an N-linked (GlcNAc...) asparagine glycan. 15 disulfides stabilise this stretch: C119–C152, C285–C294, C287–C304, C306–C315, C318–C338, C341–C350, C343–C368, C371–C380, C383–C401, C404–C416, C406–C423, C425–C434, C437–C451, C472–C544, and C491–C601. 3 Laminin EGF-like domains span residues 285–340, 341–403, and 404–453; these read CKCN…ECVA, CNCN…ACKA, and CDCH…PCIK. The N-linked (GlcNAc...) asparagine glycan is linked to N417. Positions 472-601 constitute an NTR domain; that stretch reads CDSYCKASKG…FQQREKKGKC (130 aa). A Cell attachment site motif is present at residues 530-532; the sequence is RGD.

In terms of assembly, binds to its receptors; DCC, UNC5A, UNC5B, UNC5C and probably UNC5D. Binds to its receptor; DSCAM. Interacts with DCC. Interacts with APP. As to expression, widely expressed in normal adult tissues with highest levels in heart, small intestine, colon, liver and prostate. Reduced expression in brain tumors and neuroblastomas. Expressed in epididymis (at protein level).

It is found in the secreted. The protein resides in the cytoplasm. In terms of biological role, netrins control guidance of CNS commissural axons and peripheral motor axons. Its association with either DCC or some UNC5 receptors will lead to axon attraction or repulsion, respectively. Binding to UNC5C might cause dissociation of UNC5C from polymerized TUBB3 in microtubules and thereby lead to increased microtubule dynamics and axon repulsion. Involved in dorsal root ganglion axon projection towards the spinal cord. It also serves as a survival factor via its association with its receptors which prevent the initiation of apoptosis. Involved in tumorigenesis by regulating apoptosis. The chain is Netrin-1 (NTN1) from Homo sapiens (Human).